A 280-amino-acid polypeptide reads, in one-letter code: 3-methyl-2-oxobutanoate hydroxymethyltransferase (280 aa).

Mg(2+)-binding residues include aspartate 49 and aspartate 88. Residues 49-50 (DS), aspartate 88, and lysine 118 each bind 3-methyl-2-oxobutanoate. Mg(2+) is bound at residue glutamate 120. The Proton acceptor role is filled by glutamate 186.

This sequence belongs to the PanB family. Homodecamer; pentamer of dimers. The cofactor is Mg(2+).

Its subcellular location is the cytoplasm. It catalyses the reaction 3-methyl-2-oxobutanoate + (6R)-5,10-methylene-5,6,7,8-tetrahydrofolate + H2O = 2-dehydropantoate + (6S)-5,6,7,8-tetrahydrofolate. It participates in cofactor biosynthesis; (R)-pantothenate biosynthesis; (R)-pantoate from 3-methyl-2-oxobutanoate: step 1/2. Its function is as follows. Catalyzes the reversible reaction in which hydroxymethyl group from 5,10-methylenetetrahydrofolate is transferred onto alpha-ketoisovalerate to form ketopantoate. This Ruegeria sp. (strain TM1040) (Silicibacter sp.) protein is 3-methyl-2-oxobutanoate hydroxymethyltransferase.